The sequence spans 198 residues: UDP-N-acetylglucosamine transferase subunit ALG13 (198 aa).

The protein belongs to the glycosyltransferase 28 family. As to quaternary structure, heterodimer with ALG14 to form a functional enzyme.

The protein localises to the endoplasmic reticulum. The catalysed reaction is an N-acetyl-alpha-D-glucosaminyl-diphospho-di-trans,poly-cis-dolichol + UDP-N-acetyl-alpha-D-glucosamine = an N,N'-diacetylchitobiosyl-diphospho-di-trans,poly-cis-dolichol + UDP + H(+). Functionally, involved in protein N-glycosylation. Essential for the second step of the dolichol-linked oligosaccharide pathway. In Candida glabrata (strain ATCC 2001 / BCRC 20586 / JCM 3761 / NBRC 0622 / NRRL Y-65 / CBS 138) (Yeast), this protein is UDP-N-acetylglucosamine transferase subunit ALG13 (ALG13).